A 694-amino-acid chain; its full sequence is Nucleolin (694 aa).

The interval 1–277 (MVKLAKTPKN…EAKKKKTETP (277 aa)) is disordered. Positions 26-40 (ESEEEESSDLEESSG) are enriched in acidic residues. A compositionally biased stretch (low complexity) spans 46 to 108 (PPKKQQKAAV…AVVGKGAKNG (63 aa)). 5 consecutive repeat copies span residues 55 to 61 (VTPAKKA), 62 to 68 (ATPAKKA), 69 to 75 (ATPAKKA), 76 to 82 (VTPAKKA), and 84 to 90 (ATPAKKA). The interval 55–90 (VTPAKKAATPAKKAATPAKKAVTPAKKAVATPAKKA) is 5 X 7 AA tandem repeats of X-T-P-X-K-K-X. Residues serine 116 and serine 136 each carry the phosphoserine modification. The segment covering 116-142 (SEEEDEDDEDDEEDEDEEEESDEEEEP) has biased composition (acidic residues). The segment covering 143–168 (AVPVKPAAKKSAAAVPAKKPAVVPAK) has biased composition (low complexity). Serine 171 is subject to Phosphoserine. A compositionally biased stretch (acidic residues) spans 171–194 (SEEEEEEDDEEEDEEDDESEDEAM). A compositionally biased stretch (low complexity) spans 196–213 (TTPAPVKKPTPAKATPAK). Positions 218–246 (SEDEEDEEDEDEDEEDEDDEEEDEEESED) are enriched in acidic residues. RRM domains are found at residues 281 to 357 (FSLF…KAKS), 371 to 445 (RTLF…YTGE), 461 to 535 (KTLI…FSSP), and 553 to 628 (KTLF…FAKP). A disordered region spans residues 631 to 694 (EFQRGGGFGG…KPQGKKIKFE (64 aa)). The segment covering 633 to 680 (QRGGGFGGGFGGRGGRGGRGGGRGGFGGRGGGRGFGGRGGGFRGGRGG) has biased composition (gly residues). The span at 681–694 (GGDHKPQGKKIKFE) shows a compositional bias: basic and acidic residues.

Post-translationally, highly phosphorylated during mitosis.

It localises to the nucleus. It is found in the nucleolus. Functionally, nucleolin is the major nucleolar protein of growing eukaryotic cells. It is found associated with intranucleolar chromatin and pre-ribosomal particles. It induces chromatin decondensation by binding to histone H1. It is thought to play a role in pre-rRNA transcription and ribosome assembly. The protein is Nucleolin (NCL) of Gallus gallus (Chicken).